Consider the following 1422-residue polypeptide: Guanine nucleotide exchange factor subunit RIC1 (1422 aa).

2 WD repeats span residues 64-103 (TQFGSYKQAEWRPDSTMIAVSTANGYILFFHITSSRGDKY) and 304-343 (NKTGAVKLIRWSPDNSAVIVTWEYGGLSLWSVFGAQLICT). 2 disordered regions span residues 442 to 462 (NPKYSSARAERMPRHEKSPFA) and 986 to 1005 (SGESETPPSTPTSQEPSSSG). Residues 449–460 (RAERMPRHEKSP) show a composition bias toward basic and acidic residues. A phosphothreonine mark is found at Thr991 and Thr995. 5 positions are modified to phosphoserine: Ser1014, Ser1016, Ser1018, Ser1036, and Ser1171. The disordered stretch occupies residues 1021-1048 (AENVPPGKFGLQKTLSMPTGPSGKRWSK). Disordered stretches follow at residues 1179-1198 (THRDTDRASSPGPQMQDAFL) and 1355-1422 (DTFQ…CSVS). The segment covering 1378-1396 (GSCSHGSISQSEPGSNNVV) has biased composition (polar residues). Over residues 1403 to 1412 (TTQADEEEPL) the composition is skewed to acidic residues.

The protein belongs to the RIC1 family. As to quaternary structure, forms a complex with RGP1; the interaction enhances RAB6A GTPase activity. Interacts (via central domain) with RGP1. Interacts with RAB6A; the interaction is direct with a preference for RAB6A-GDP. Interacts (via C-terminus domain) with RAB33B; the interaction is direct with a preference for RAB33B-GTP. Interacts with GJA1. As to expression, expressed in the eye lens.

The protein resides in the cytoplasm. It localises to the cytosol. Its subcellular location is the membrane. In terms of biological role, the RIC1-RGP1 complex acts as a guanine nucleotide exchange factor (GEF), which activates RAB6A by exchanging bound GDP for free GTP, and may thereby be required for efficient fusion of endosome-derived vesicles with the Golgi compartment. The RIC1-RGP1 complex participates in the recycling of mannose-6-phosphate receptors. Required for phosphorylation and localization of GJA1. Is a regulator of procollagen transport and secretion, and is required for correct cartilage morphogenesis and development of the craniofacial skeleton. This chain is Guanine nucleotide exchange factor subunit RIC1, found in Mus musculus (Mouse).